A 255-amino-acid chain; its full sequence is Small ribosomal subunit protein eS1B (255 aa).

N-acetylalanine; partial is present on Ala-2. At Ser-245 the chain carries Phosphoserine. Lys-248 is covalently cross-linked (Glycyl lysine isopeptide (Lys-Gly) (interchain with G-Cter in ubiquitin)). Phosphothreonine is present on Thr-254.

Belongs to the eukaryotic ribosomal protein eS1 family. As to quaternary structure, component of the small ribosomal subunit. Mature ribosomes consist of a small (40S) and a large (60S) subunit. The 40S subunit contains about 33 different proteins and 1 molecule of RNA (18S). The 60S subunit contains about 49 different proteins and 3 molecules of RNA (25S, 5.8S and 5S).

The protein localises to the cytoplasm. The chain is Small ribosomal subunit protein eS1B from Saccharomyces cerevisiae (strain JAY291) (Baker's yeast).